A 1378-amino-acid chain; its full sequence is Hybrid signal transduction histidine kinase H (1378 aa).

The stretch at 212–242 (KEKFKKEELINDFKSRLETLENKIDQRVDER) forms a coiled coil. The 72-residue stretch at 243–314 (IETRFKYVLE…NNNNNNNNNN (72 aa)) folds into the PAS domain. Residues 294–337 (YQQHNNNNNNNNNNNNNNNNNNNNNSNNKSPIINSPNTTSPTNT) are disordered. The span at 298-337 (NNNNNNNNNNNNNNNNNNNNNSNNKSPIINSPNTTSPTNT) shows a compositional bias: low complexity. The Histidine kinase domain occupies 498 to 805 (TMSHEMRTPL…SFHFLVEVFF (308 aa)). Residue His501 is modified to Phosphohistidine; by autocatalysis. Positions 663 to 696 (NNSNNSNNNHNHNNNNNNNNHLNCSGSFNNNGFN) are enriched in low complexity. 3 disordered regions span residues 663–717 (NNSN…DKHC), 905–924 (TNNNNSNNDNNNNNTTSTTT), and 1103–1213 (NNSN…HPNP). A compositionally biased stretch (basic residues) spans 697–714 (HGHHHHHHHHHHHHHHHD). 2 stretches are compositionally biased toward low complexity: residues 1103 to 1119 (NNSNNNINNNNNNSGSS) and 1136 to 1187 (SPSL…NNNN). The segment covering 1188–1206 (LNHYNSDSILSSDLSPQQH) has biased composition (polar residues). One can recognise a Response regulatory domain in the interval 1244 to 1364 (KIMVAEDSLV…ILAVELKRAW (121 aa)). Asp1297 is modified (4-aspartylphosphate).

Activation probably requires transfer of a phosphate group between a histidine in the kinase core (transmitter) domain and an aspartate of the receiver domain.

It catalyses the reaction ATP + protein L-histidine = ADP + protein N-phospho-L-histidine.. In terms of biological role, acts as a receptor histidine kinase for a signal transduction pathway. This protein undergoes an ATP-dependent autophosphorylation at a conserved histidine residue in the kinase core, and a phosphoryl group is then transferred to a conserved aspartate residue in the receiver domain. The protein is Hybrid signal transduction histidine kinase H (dhkH) of Dictyostelium discoideum (Social amoeba).